The sequence spans 343 residues: Methionine import ATP-binding protein MetN 1 (343 aa).

Residues 2-241 (IKLTHISKVF…PKTPLAQQFI (240 aa)) enclose the ABC transporter domain. Position 38–45 (38–45 (GASGAGKS)) interacts with ATP.

Belongs to the ABC transporter superfamily. Methionine importer (TC 3.A.1.24) family. The complex is composed of two ATP-binding proteins (MetN), two transmembrane proteins (MetI) and a solute-binding protein (MetQ).

It localises to the cell inner membrane. It catalyses the reaction L-methionine(out) + ATP + H2O = L-methionine(in) + ADP + phosphate + H(+). The enzyme catalyses D-methionine(out) + ATP + H2O = D-methionine(in) + ADP + phosphate + H(+). Functionally, part of the ABC transporter complex MetNIQ involved in methionine import. Responsible for energy coupling to the transport system. This Yersinia pestis bv. Antiqua (strain Antiqua) protein is Methionine import ATP-binding protein MetN 1.